Consider the following 29-residue polypeptide: Kalata-B4 (29 aa).

Positions 1–29 (GLPVCGETCVGGTCNTPGCTCSWPVCTRD) form a cross-link, cyclopeptide (Gly-Asp). 3 disulfides stabilise this stretch: Cys-5/Cys-19, Cys-9/Cys-21, and Cys-14/Cys-26.

This is a cyclic peptide.

In terms of biological role, probably participates in a plant defense mechanism. In Oldenlandia affinis, this protein is Kalata-B4.